The primary structure comprises 269 residues: 4-hydroxy-tetrahydrodipicolinate reductase (269 aa).

Residues 11-16 (GASGRM) and Glu37 contribute to the NAD(+) site. Arg38 contacts NADP(+). NAD(+) is bound by residues 101–103 (GTT) and 125–128 (AGNM). Residue His158 is the Proton donor/acceptor of the active site. (S)-2,3,4,5-tetrahydrodipicolinate is bound at residue His159. Lys162 serves as the catalytic Proton donor. 168–169 (GT) serves as a coordination point for (S)-2,3,4,5-tetrahydrodipicolinate.

It belongs to the DapB family.

It is found in the cytoplasm. The enzyme catalyses (S)-2,3,4,5-tetrahydrodipicolinate + NAD(+) + H2O = (2S,4S)-4-hydroxy-2,3,4,5-tetrahydrodipicolinate + NADH + H(+). It catalyses the reaction (S)-2,3,4,5-tetrahydrodipicolinate + NADP(+) + H2O = (2S,4S)-4-hydroxy-2,3,4,5-tetrahydrodipicolinate + NADPH + H(+). The protein operates within amino-acid biosynthesis; L-lysine biosynthesis via DAP pathway; (S)-tetrahydrodipicolinate from L-aspartate: step 4/4. In terms of biological role, catalyzes the conversion of 4-hydroxy-tetrahydrodipicolinate (HTPA) to tetrahydrodipicolinate. This chain is 4-hydroxy-tetrahydrodipicolinate reductase, found in Cereibacter sphaeroides (strain ATCC 17029 / ATH 2.4.9) (Rhodobacter sphaeroides).